Here is a 618-residue protein sequence, read N- to C-terminus: Prothrombin (618 aa).

The signal sequence occupies residues 1 to 24; that stretch reads MSHVRGLGLPGCLALAALVSLVHS. The propeptide occupies 25–43; the sequence is QHVFLAPQQALSLLQRVRR. The Gla domain maps to 44–90; that stretch reads ANSGFLEELRKGNLERECVEEQCSYEEAFEALESPQDTDVFWAKYTV. E50, E51, E58, E60, E63, E64, E69, E70, E73, and E76 each carry 4-carboxyglutamate. C61 and C66 are joined by a disulfide. 10 disulfides stabilise this stretch: C91-C104, C109-C187, C130-C170, C158-C182, C215-C293, C236-C276, C264-C288, C333-C479, C388-C404, and C533-C547. Kringle domains lie at 109 to 187 and 215 to 292; these read CAMD…VPVC and CLTE…NLNY. N-linked (GlcNAc...) asparagine glycosylation is found at N122 and N144. The 255-residue stretch at 361-615 folds into the Peptidase S1 domain; sequence IVEGWDAEKG…LKRWIQKVID (255 aa). H403 functions as the Charge relay system in the catalytic mechanism. N413 carries an N-linked (GlcNAc...) asparagine glycan. D459 (charge relay system) is an active-site residue. Residues 548–570 form a high affinity receptor-binding region which is also known as the TP508 peptide region; sequence AGFKVNDTKRGDACEGDSGGPFV. N553 carries an N-linked (GlcNAc...) asparagine glycan. C561 and C591 are disulfide-bonded. S565 serves as the catalytic Charge relay system.

The protein belongs to the peptidase S1 family. In terms of assembly, heterodimer (named alpha-thrombin) of a light and a heavy chain; disulfide-linked. Forms a heterodimer with SERPINA5. In plasma, interacts (via N-terminus) with alpha-1-microglobulin; this interaction does not prevent the activation of prothrombin to thrombin. The gamma-carboxyglutamyl residues, which bind calcium ions, result from the carboxylation of glutamyl residues by a microsomal enzyme, the vitamin K-dependent carboxylase. The modified residues are necessary for the calcium-dependent interaction with a negatively charged phospholipid surface, which is essential for the conversion of prothrombin to thrombin. Post-translationally, in the penultimate step of the coagulation cascade, prothrombin is converted to thrombin by the prothrombinase complex composed of factor Xa (F10), cofactor Va (F5), and phospholipids. This activation requires factor Xa-catalyzed sequential cleavage at 2 sites, Arg-311 and Arg-360, along 2 possible pathways. In the first pathway, the first cleavage occurs at Arg-311, leading to the formation of the inactive intermediate prethrombin-2. This pathway preferentially occurs on platelets and in the absence of cofactor Va. In the second pathway, the first cleavage occurs at Arg-360, which separates protease domain into 2 chains that remain connected through a disulfide bond and generates the active intermediate meizothrombin. The presence of cofactor Va directs activation along the meizothrombin pathway and greatly accelerates the rate of cleavage at Arg-360, but has a smaller effect on the cleavage of meizothrombin at Arg-311. Meizothrombin accumulates as an intermediate when prothrombinase is assembled on the membrane of red blood cells.

It carries out the reaction Selective cleavage of Arg-|-Gly bonds in fibrinogen to form fibrin and release fibrinopeptides A and B.. Activity is promoted in the presence of negatively charged surfaces, such as polyphosphate and dextran sulfate. Inhibited by SERPINA5. Its function is as follows. Thrombin, which cleaves bonds after Arg and Lys, converts fibrinogen to fibrin and activates factors V, VII, VIII, XIII, and, in complex with thrombomodulin, protein C. Functions in blood homeostasis, inflammation and wound healing. Activates coagulation factor XI (F11); activation is promoted by the contact with negatively charged surfaces. Triggers the production of pro-inflammatory cytokines, such as MCP-1/CCL2 and IL8/CXCL8, in endothelial cells. In Mus musculus (Mouse), this protein is Prothrombin (F2).